The sequence spans 444 residues: Bystin (444 aa).

Disordered regions lie at residues 1–37 and 53–85; these read MAKK…HQKQ and ALAQ…TAGE. The segment covering 24 to 34 has biased composition (basic residues); it reads SRKRSKVPKTH. Low complexity predominate over residues 73–84; that stretch reads AAFAVAGAATAG.

It belongs to the bystin family. Component of the 40S pre-ribosome. As to expression, highly expressed in flowers and at lower levels in roots, hypocotyls, stems, leaves, siliques and seeds.

It is found in the nucleus. Its subcellular location is the nucleolus. It localises to the nucleoplasm. In terms of biological role, essential protein required during embryogenesis and pollen development. Required for processing of 20S pre-rRNA precursor and biogenesis of 40S ribosomal subunits. In Arabidopsis thaliana (Mouse-ear cress), this protein is Bystin.